We begin with the raw amino-acid sequence, 1019 residues long: Katanin p80 WD40 repeat-containing subunit B1 homolog KTN80.1 (1019 aa).

WD repeat units follow at residues 13-53, 56-95, 98-137, 140-181, 183-221, 224-264, and 266-303; these read AHSG…SPMS, GHTS…MVRA, GHRS…CIQT, GHTR…HEFK, HEGP…LIGT, PEAT…DGVD, and GWST…LEPY. Positions 114–130 match the DWD box motif; that stretch reads FLASGSSDTNLRVWDTR. Disordered stretches follow at residues 388–424, 455–474, 517–581, and 607–652; these read FGPA…TKSG, KSGL…LSEQ, IHRS…GSRE, and RGEK…RARS. Residues 465 to 474 are compositionally biased toward polar residues; that stretch reads QTQNAFLSEQ. Residues 553–572 show a composition bias toward basic and acidic residues; the sequence is IPSKTERVLSREKPGDEQKN. Residues 614–628 are compositionally biased toward polar residues; the sequence is TEGASTTIEQNNNAV.

The protein belongs to the WD repeat KATNB1 family. As to quaternary structure, component of KTN80-KTN1 complexes composed of a hexamer of KTN1-KTN80 heterodimers that sense microtubule (MT) geometry to confer precise MT severing. Interacts directly with AAA1/KTN1 and KTN80.3, and weakly with KTN80.4. In terms of tissue distribution, expressed at low levels in siliques, flowers, leaves, stems and roots.

Its subcellular location is the cytoplasm. It is found in the cytoskeleton. Functionally, may participate in a complex which severs microtubules in an ATP-dependent manner. Microtubule severing may promote rapid reorganization of cellular microtubule arrays. Confers precision to microtubule (MT) severing by specific targeting of KTN1 to MT cleavage sites such as crossover or branching nucleation sites. Together with other KTN80s, regulates cell elongation by modulating MT organization. In Arabidopsis thaliana (Mouse-ear cress), this protein is Katanin p80 WD40 repeat-containing subunit B1 homolog KTN80.1.